The primary structure comprises 344 residues: L-rhamnose-proton symporter (344 aa).

10 consecutive transmembrane segments (helical) span residues 4-24 (AITM…CFYA), 38-58 (WSVG…ALLL), 68-88 (FSLS…IGNI), 101-121 (MGIG…TPII), 137-157 (TLLG…AGQL), 175-195 (LVLA…MNAA), 214-234 (LPSY…FCFI), 259-279 (VLLS…YAWG), 290-310 (ISWM…GLVL), and 323-343 (VLSL…IGMA).

This sequence belongs to the L-rhamnose transporter (TC 2.A.7.6) family.

It is found in the cell inner membrane. It catalyses the reaction L-rhamnopyranose(in) + H(+)(in) = L-rhamnopyranose(out) + H(+)(out). Functionally, uptake of L-rhamnose across the cytoplasmic membrane with the concomitant transport of protons into the cell (symport system). This chain is L-rhamnose-proton symporter, found in Escherichia coli (strain 55989 / EAEC).